Here is a 414-residue protein sequence, read N- to C-terminus: Tar DNA-binding protein homolog 1 (414 aa).

Basic and acidic residues-rich tracts occupy residues 1–44 (MADE…KTTD) and 153–167 (DDGR…RAVE). Disordered stretches follow at residues 1–58 (MADE…GDEP) and 132–167 (SSAD…RAVE). RRM domains are found at residues 173-259 (VDLI…QGRP) and 262-341 (SRIF…IAQP). The interval 343-414 (EENNQSVGPD…APGDSRGPGW (72 aa)) is disordered. The segment covering 361 to 373 (NRRERDRPDRRPI) has biased composition (basic and acidic residues).

As to quaternary structure, interacts with chromobox protein homolog hpl-2; interaction may maintain localization of hpl-2 to gene bodies. As to expression, widely expressed in a range of tissues including body wall muscles, pharynx and neurons of the midbody in adults and larvae.

The protein localises to the nucleus. It is found in the cytoplasm. Its function is as follows. RNA-binding protein which regulates transcription, splicing and RNA-editing. Limits the accumulation of double-stranded RNA by maintaining the abundance of the mature RNA transcripts that are formed from double-stranded precursor RNAs. Stress response protein that acts downstream of daf-16 in the insulin/IGF pathway to regulate longevity and the cellular stress response to osmotic, oxidative, proteotoxic and endoplasmic reticulum stress. Involved in the regulation of physiological processes including aging, fertility, growth and locomotion. Plays a role in maintaining localization of chromobox protein homolog hpl-2 to gene bodies, perhaps acting via binding to nascent RNA transcripts. The chain is Tar DNA-binding protein homolog 1 from Caenorhabditis elegans.